The sequence spans 695 residues: MEKDLTRYRNIGIFAHVDAGKTTTTERILKLTGRIHKLGEVHEGESTMDFMEQEAERGITIQSAATSCFWKDHQLNVIDTPGHVDFTIEVYRSLKVLDGGIGVFCGSGGVEPQSETNWRYANDSKVARLIYINKLDRTGADFYRVVKQVETVLGAKPLVMTLPIGTENDFVGVVDILTEKAYIWDDSGDPEKYEITDIPADMVDDVATYREMLIETAVEQDDDLMEKYLEGEEISIDDIKRCIRTGTRKLDFFPTYGGSSFKNKGVQLVLDAVVDYLPNPKEVPPQPEVDLEGEETGNYAIVDPEAPLRALAFKIMDDRFGALTFTRIYSGTLSKGDTILNTATGKTERIGRLVEMHADSREEIESAQAGDIVAIVGMKNVQTGHTLCDPKNPATLEPMVFPDPVISIAIKPKKKGMDEKLGMALSKMVQEDPSFQVETDEESGETIIKGMGELHLDIKMDILKRTHGVEVEMGKPQVAYRESITQQVSDTYVHKKQSGGSGQYAKIDYIVEPGEPGSGFQFESKVTGGNVPREYWPAVQKGFDQSVVKGVLAGYPVVDLKVTLTDGGFHPVDSSAIAFEIAAKAGYRQSLPKAKPQILEPIMAVDVFTPEDHMGDVIGDLNRRRGMIKSQETGPMGVRVKADVPLSEMFGYIGDLRTMTSGRGQFSMVFDHYAPCPTNVAEEVIKEAKERQAAA.

One can recognise a tr-type G domain in the interval 6–281 (TRYRNIGIFA…AVVDYLPNPK (276 aa)). Residues 15 to 22 (AHVDAGKT), 79 to 83 (DTPGH), and 133 to 136 (NKLD) each bind GTP.

It belongs to the TRAFAC class translation factor GTPase superfamily. Classic translation factor GTPase family. EF-G/EF-2 subfamily.

The protein resides in the cytoplasm. Its function is as follows. Catalyzes the GTP-dependent ribosomal translocation step during translation elongation. During this step, the ribosome changes from the pre-translocational (PRE) to the post-translocational (POST) state as the newly formed A-site-bound peptidyl-tRNA and P-site-bound deacylated tRNA move to the P and E sites, respectively. Catalyzes the coordinated movement of the two tRNA molecules, the mRNA and conformational changes in the ribosome. This is Elongation factor G 1 (fusA) from Synechocystis sp. (strain ATCC 27184 / PCC 6803 / Kazusa).